Reading from the N-terminus, the 514-residue chain is Bifunctional purine biosynthesis protein PurH (514 aa).

One can recognise an MGS-like domain in the interval 1-142; that stretch reads MLALLSVSDK…KNFRHVSVVV (142 aa).

It belongs to the PurH family.

The catalysed reaction is (6R)-10-formyltetrahydrofolate + 5-amino-1-(5-phospho-beta-D-ribosyl)imidazole-4-carboxamide = 5-formamido-1-(5-phospho-D-ribosyl)imidazole-4-carboxamide + (6S)-5,6,7,8-tetrahydrofolate. The enzyme catalyses IMP + H2O = 5-formamido-1-(5-phospho-D-ribosyl)imidazole-4-carboxamide. Its pathway is purine metabolism; IMP biosynthesis via de novo pathway; 5-formamido-1-(5-phospho-D-ribosyl)imidazole-4-carboxamide from 5-amino-1-(5-phospho-D-ribosyl)imidazole-4-carboxamide (10-formyl THF route): step 1/1. The protein operates within purine metabolism; IMP biosynthesis via de novo pathway; IMP from 5-formamido-1-(5-phospho-D-ribosyl)imidazole-4-carboxamide: step 1/1. This is Bifunctional purine biosynthesis protein PurH from Myxococcus xanthus (strain DK1622).